Consider the following 562-residue polypeptide: Arginine--tRNA ligase (562 aa).

The 'HIGH' region motif lies at P121–H131.

This sequence belongs to the class-I aminoacyl-tRNA synthetase family. As to quaternary structure, monomer.

The protein resides in the cytoplasm. The catalysed reaction is tRNA(Arg) + L-arginine + ATP = L-arginyl-tRNA(Arg) + AMP + diphosphate. The chain is Arginine--tRNA ligase from Streptococcus uberis (strain ATCC BAA-854 / 0140J).